We begin with the raw amino-acid sequence, 776 residues long: Probable inorganic carbon transporter subunit DabA (776 aa).

The Zn(2+) site is built by Cys313, Asp315, His473, and Cys488.

It belongs to the inorganic carbon transporter (TC 9.A.2) DabA family. As to quaternary structure, forms a complex with DabB. It depends on Zn(2+) as a cofactor.

It is found in the cell inner membrane. Functionally, part of an energy-coupled inorganic carbon pump. This chain is Probable inorganic carbon transporter subunit DabA, found in Chromobacterium violaceum (strain ATCC 12472 / DSM 30191 / JCM 1249 / CCUG 213 / NBRC 12614 / NCIMB 9131 / NCTC 9757 / MK).